The sequence spans 135 residues: Large ribosomal subunit protein uL16m (135 aa).

Belongs to the universal ribosomal protein uL16 family.

It is found in the mitochondrion. The sequence is that of Large ribosomal subunit protein uL16m (RPL16) from Prototheca wickerhamii.